The sequence spans 229 residues: Ribosome maturation factor RimM (229 aa).

A disordered region spans residues 1–39; sequence MAGHDSGSAKRGRSPSFGVFVRKPVERAPTKGAGDGAAD. The region spanning 148-229 is the PRC barrel domain; it reads ADEFYWVDLI…RIVVDWEADY (82 aa).

This sequence belongs to the RimM family. Binds ribosomal protein uS19.

The protein resides in the cytoplasm. In terms of biological role, an accessory protein needed during the final step in the assembly of 30S ribosomal subunit, possibly for assembly of the head region. Essential for efficient processing of 16S rRNA. May be needed both before and after RbfA during the maturation of 16S rRNA. It has affinity for free ribosomal 30S subunits but not for 70S ribosomes. The polypeptide is Ribosome maturation factor RimM (Burkholderia thailandensis (strain ATCC 700388 / DSM 13276 / CCUG 48851 / CIP 106301 / E264)).